Consider the following 767-residue polypeptide: MGSKRRFSSEHPDPVETSIPEQAAEIAEELSKQHPLPSEEPLVHHDAGEFKGLQRHHTSAEEAQKLEDGKINPFTGREFTPKYVDILKIRRELPVHAQRDEFLKLYQNNQIMVFVGETGSGKTTQIPQFVLFDEMPHLENTQVACTQPRRVAAMSVAQRVAEEMDVKLGEEVGYSIRFENKTSNKTILKYMTDGMLLREAMEDHDLSRYSCIILDEAHERTLATDILMGLLKQVVKRRPDLKIIIMSATLDAEKFQRYFNDAPLLAVPGRTYPVELYYTPEFQRDYLDSAIRTVLQIHATEEAGDILLFLTGEDEIEDAVRKISLEGDQLVREEGCGPLSVYPLYGSLPPHQQQRIFEPAPESHNGRPGRKVVISTNIAETSLTIDGIVYVVDPGFSKQKVYNPRIRVESLLVSPISKASAQQRAGRAGRTRPGKCFRLYTEEAFQKELIEQSYPEILRSNLSSTVLELKKLGIDDLVHFDFMDPPAPETMMRALEELNYLACLDDEGNLTPLGRLASQFPLDPMLAVMLIGSFEFQCSQEILTIVAMLSVPNVFIRPTKDKKRADDAKNIFAHPDGDHITLLNVYHAFKSDEAYEYGIHKWCRDHYLNYRSLSAADNIRSQLERLMNRYNLELNTTDYESPKYFDNIRKALASGFFMQVAKKRSGAKGYITVKDNQDVLIHPSTVLGHDAEWVIYNEFVLTSKNYIRTVTSVRPEWLIEIAPAYYDLSNFQKGDVKLSLERIKEKVDRLNELKQGKNKKKSKHSKK.

Positions 1 to 74 (MGSKRRFSSE…KLEDGKINPF (74 aa)) are disordered. Phosphoserine occurs at positions 8 and 9. Positions 58–70 (TSAEEAQKLEDGK) are enriched in basic and acidic residues. In terms of domain architecture, Helicase ATP-binding spans 103–268 (LKLYQNNQIM…FNDAPLLAVP (166 aa)). 116–123 (GETGSGKT) serves as a coordination point for ATP. Positions 215–218 (DEAH) match the DEAH box motif. The Helicase C-terminal domain maps to 293–473 (TVLQIHATEE…STVLELKKLG (181 aa)).

It belongs to the DEAD box helicase family. DEAH subfamily. DDX15/PRP43 sub-subfamily. In terms of assembly, component of the NTR complex (NTC-related complex), composed of NTR1, NTR2 and PRP43. Interacts with NTR1 and NTR2. Interacts with SPP382.

It is found in the nucleus. The catalysed reaction is ATP + H2O = ADP + phosphate + H(+). In terms of biological role, pre-mRNA processing factor involved in disassembly of spliceosomes after the release of mature mRNA. The polypeptide is Pre-mRNA-splicing factor ATP-dependent RNA helicase PRP43 (PRP43) (Saccharomyces cerevisiae (strain ATCC 204508 / S288c) (Baker's yeast)).